Consider the following 172-residue polypeptide: Putative metal-dependent hydrolase OB0782 (172 aa).

His-64, His-155, and His-159 together coordinate Zn(2+).

It belongs to the metal hydrolase YfiT family. As to quaternary structure, homodimer. Requires Zn(2+) as cofactor.

It localises to the cytoplasm. Functionally, possible metal-dependent hydrolase. In Oceanobacillus iheyensis (strain DSM 14371 / CIP 107618 / JCM 11309 / KCTC 3954 / HTE831), this protein is Putative metal-dependent hydrolase OB0782.